A 104-amino-acid polypeptide reads, in one-letter code: uncharacterized protein (104 aa).

The segment at 62–92 (SSPAASSHPRKRGKEKKERTPTERLAAPARK) is disordered.

This is an uncharacterized protein from Human adenovirus B serotype 7 (HAdV-7).